A 345-amino-acid polypeptide reads, in one-letter code: Holliday junction branch migration complex subunit RuvB (345 aa).

The large ATPase domain (RuvB-L) stretch occupies residues 4 to 194 (TDKLFGAAPE…FGIVARLEFY (191 aa)). Residues Leu-33, Arg-34, Gly-75, Lys-78, Thr-79, Thr-80, 141-143 (EDY), Arg-184, Tyr-194, and Arg-231 each bind ATP. Thr-79 lines the Mg(2+) pocket. Residues 195–265 (NAEELTRIVS…VADAALAMLD (71 aa)) are small ATPAse domain (RuvB-S). The tract at residues 268-345 (PAGLDVMDRK…LHFGLPVKDA (78 aa)) is head domain (RuvB-H). Arg-323 and Arg-328 together coordinate DNA.

Belongs to the RuvB family. In terms of assembly, homohexamer. Forms an RuvA(8)-RuvB(12)-Holliday junction (HJ) complex. HJ DNA is sandwiched between 2 RuvA tetramers; dsDNA enters through RuvA and exits via RuvB. An RuvB hexamer assembles on each DNA strand where it exits the tetramer. Each RuvB hexamer is contacted by two RuvA subunits (via domain III) on 2 adjacent RuvB subunits; this complex drives branch migration. In the full resolvosome a probable DNA-RuvA(4)-RuvB(12)-RuvC(2) complex forms which resolves the HJ.

It localises to the cytoplasm. The catalysed reaction is ATP + H2O = ADP + phosphate + H(+). Its function is as follows. The RuvA-RuvB-RuvC complex processes Holliday junction (HJ) DNA during genetic recombination and DNA repair, while the RuvA-RuvB complex plays an important role in the rescue of blocked DNA replication forks via replication fork reversal (RFR). RuvA specifically binds to HJ cruciform DNA, conferring on it an open structure. The RuvB hexamer acts as an ATP-dependent pump, pulling dsDNA into and through the RuvAB complex. RuvB forms 2 homohexamers on either side of HJ DNA bound by 1 or 2 RuvA tetramers; 4 subunits per hexamer contact DNA at a time. Coordinated motions by a converter formed by DNA-disengaged RuvB subunits stimulates ATP hydrolysis and nucleotide exchange. Immobilization of the converter enables RuvB to convert the ATP-contained energy into a lever motion, pulling 2 nucleotides of DNA out of the RuvA tetramer per ATP hydrolyzed, thus driving DNA branch migration. The RuvB motors rotate together with the DNA substrate, which together with the progressing nucleotide cycle form the mechanistic basis for DNA recombination by continuous HJ branch migration. Branch migration allows RuvC to scan DNA until it finds its consensus sequence, where it cleaves and resolves cruciform DNA. The polypeptide is Holliday junction branch migration complex subunit RuvB (Chromobacterium violaceum (strain ATCC 12472 / DSM 30191 / JCM 1249 / CCUG 213 / NBRC 12614 / NCIMB 9131 / NCTC 9757 / MK)).